Reading from the N-terminus, the 408-residue chain is 4-hydroxy-3-methylbut-2-en-1-yl diphosphate synthase (ferredoxin) (408 aa).

Residues 1–21 (MQTLPTPTTSSNTANQSTFDT) show a composition bias toward polar residues. The segment at 1-26 (MQTLPTPTTSSNTANQSTFDTTIKRR) is disordered. [4Fe-4S] cluster contacts are provided by Cys317, Cys320, Cys351, and Glu358.

This sequence belongs to the IspG family. It depends on [4Fe-4S] cluster as a cofactor.

It carries out the reaction (2E)-4-hydroxy-3-methylbut-2-enyl diphosphate + 2 oxidized [2Fe-2S]-[ferredoxin] + H2O = 2-C-methyl-D-erythritol 2,4-cyclic diphosphate + 2 reduced [2Fe-2S]-[ferredoxin] + H(+). It participates in isoprenoid biosynthesis; isopentenyl diphosphate biosynthesis via DXP pathway; isopentenyl diphosphate from 1-deoxy-D-xylulose 5-phosphate: step 5/6. Converts 2C-methyl-D-erythritol 2,4-cyclodiphosphate (ME-2,4cPP) into 1-hydroxy-2-methyl-2-(E)-butenyl 4-diphosphate. This is 4-hydroxy-3-methylbut-2-en-1-yl diphosphate synthase (ferredoxin) from Trichormus variabilis (strain ATCC 29413 / PCC 7937) (Anabaena variabilis).